We begin with the raw amino-acid sequence, 835 residues long: Lon protease (835 aa).

Residues 36–234 (VHVFPLLRRP…KALILLKKEL (199 aa)) form the Lon N-terminal domain. ATP is bound at residue 387 to 394 (GPPGVGKT). The Lon proteolytic domain occupies 646-828 (RTPVGVCMGL…DQVFKISFPN (183 aa)). Residues Ser734 and Lys777 contribute to the active site.

It belongs to the peptidase S16 family. As to quaternary structure, homohexamer. Organized in a ring with a central cavity.

The protein localises to the cytoplasm. The enzyme catalyses Hydrolysis of proteins in presence of ATP.. Its function is as follows. ATP-dependent serine protease that mediates the selective degradation of mutant and abnormal proteins as well as certain short-lived regulatory proteins. Required for cellular homeostasis and for survival from DNA damage and developmental changes induced by stress. Degrades polypeptides processively to yield small peptide fragments that are 5 to 10 amino acids long. Binds to DNA in a double-stranded, site-specific manner. This chain is Lon protease, found in Protochlamydia amoebophila (strain UWE25).